The sequence spans 328 residues: Malate dehydrogenase (328 aa).

12–18 (GAAGQIA) lines the NAD(+) pocket. Substrate is bound by residues R93 and R99. Residues N106, Q113, and 130 to 132 (VGN) contribute to the NAD(+) site. Residues N132 and R163 each coordinate substrate. H188 (proton acceptor) is an active-site residue.

Belongs to the LDH/MDH superfamily. MDH type 2 family.

The enzyme catalyses (S)-malate + NAD(+) = oxaloacetate + NADH + H(+). In terms of biological role, catalyzes the reversible oxidation of malate to oxaloacetate. The sequence is that of Malate dehydrogenase from Burkholderia cenocepacia (strain ATCC BAA-245 / DSM 16553 / LMG 16656 / NCTC 13227 / J2315 / CF5610) (Burkholderia cepacia (strain J2315)).